The chain runs to 325 residues: Serine/threonine-protein phosphatase 2A activator 1 (325 aa).

It belongs to the PTPA-type PPIase family.

The protein localises to the cytoplasm. Its subcellular location is the nucleus. The catalysed reaction is [protein]-peptidylproline (omega=180) = [protein]-peptidylproline (omega=0). Its function is as follows. PPIases accelerate the folding of proteins. It catalyzes the cis-trans isomerization of proline imidic peptide bonds in oligopeptides. Acts as a regulatory subunit for PP2A-like phosphatases modulating their activity or substrate specificity, probably by inducing a conformational change in the catalytic subunit, a direct target of the PPIase. Can reactivate inactive phosphatase PP2A-phosphatase methylesterase complexes (PP2Ai) in presence of ATP and Mg(2+) by dissociating the inactive form from the complex. The polypeptide is Serine/threonine-protein phosphatase 2A activator 1 (rrd1) (Schizosaccharomyces pombe (strain 972 / ATCC 24843) (Fission yeast)).